Here is a 1021-residue protein sequence, read N- to C-terminus: Multidrug resistance protein MdtC (1021 aa).

The Cytoplasmic portion of the chain corresponds to 1 to 6 (MKFFAL). Residues 7 to 29 (FIYRPVATILLSVAITLCGILGF) form a helical membrane-spanning segment. The Periplasmic segment spans residues 30 to 335 (RMLPVAPLPQ…TIRASLEEVE (306 aa)). Residues 336–353 (QTLIISVALVILVVFLFL) traverse the membrane as a helical segment. Residues 354 to 359 (RSGRAT) lie on the Cytoplasmic side of the membrane. The chain crosses the membrane as a helical span at residues 360–379 (IIPAVAVPVSLIGTFAAMYL). Residues 380 to 388 (CGFSLNNLS) lie on the Periplasmic side of the membrane. Residues 389-411 (LMALTIATGFVVDDAIVVLENIA) form a helical membrane-spanning segment. Residues 412-430 (RHLEAGMKPLQAALQGTRE) are Cytoplasmic-facing. The helical transmembrane segment at 431-453 (VGFTVLSMSLSLVAVFLPLLLMG) threads the bilayer. Over 454–467 (GLPGRLLREFAVTL) the chain is Periplasmic. A helical transmembrane segment spans residues 468–490 (SVAIGISLLVSLTLTPMMCGWML). Topologically, residues 491-848 (KASKPREQKR…QVFQETMNSQ (358 aa)) are cytoplasmic. A helical membrane pass occupies residues 849-871 (VILIIAAIATVYIVLGILYESYV). Residues 872 to 890 (HPLTILSTLPSAGVGALLA) are Periplasmic-facing. The helical transmembrane segment at 891 to 913 (LELFNAPFSLIALIGIMLLIGIV) threads the bilayer. The Cytoplasmic segment spans residues 914–943 (KKNAIMMVDFALEAQRHGNLTPQEAIFQAC). The chain crosses the membrane as a helical span at residues 944–966 (LLRFRPIMMTTLAALFGALPLVL). The Periplasmic segment spans residues 967–980 (SGGDGSELRQPLEI). Residues 981–1003 (TIVGGLVMSQLLTLYTTPVVYLF) traverse the membrane as a helical segment. Over 1004 to 1021 (FDRLRLRFSRKPKQTVTE) the chain is Cytoplasmic.

Belongs to the resistance-nodulation-cell division (RND) (TC 2.A.6) family. MdtC subfamily. In terms of assembly, part of a tripartite efflux system composed of MdtA, MdtB and MdtC. MdtC forms a heteromultimer with MdtB.

The protein resides in the cell inner membrane. The protein is Multidrug resistance protein MdtC of Shigella flexneri.